The primary structure comprises 333 residues: DNA-directed RNA polymerase subunit alpha (333 aa).

The tract at residues 1–234 (MQISVNEFLT…QQLAAFVDLK (234 aa)) is alpha N-terminal domain (alpha-NTD). The alpha C-terminal domain (alpha-CTD) stretch occupies residues 248–333 (IDPILLRPVD…SLKKDDKATA (86 aa)).

It belongs to the RNA polymerase alpha chain family. Homodimer. The RNAP catalytic core consists of 2 alpha, 1 beta, 1 beta' and 1 omega subunit. When a sigma factor is associated with the core the holoenzyme is formed, which can initiate transcription.

It carries out the reaction RNA(n) + a ribonucleoside 5'-triphosphate = RNA(n+1) + diphosphate. Functionally, DNA-dependent RNA polymerase catalyzes the transcription of DNA into RNA using the four ribonucleoside triphosphates as substrates. The protein is DNA-directed RNA polymerase subunit alpha of Ectopseudomonas mendocina (strain ymp) (Pseudomonas mendocina).